The sequence spans 533 residues: Early growth response protein 1 (533 aa).

2 disordered regions span residues 1–94 and 161–237; these read MAAA…EQPY and MTNP…PPPA. Gly residues predominate over residues 68 to 77; the sequence is SGGGGGGGSN. A compositionally biased stretch (low complexity) spans 164-189; it reads PPTSSSSAPSPAASSSSSASQSPPLS. Lys-303 participates in a covalent cross-link: Glycyl lysine isopeptide (Lys-Gly) (interchain with G-Cter in SUMO2). The segment at 316–336 is disordered; it reads PSRMRKYPNRPSKTPPHERPY. 3 consecutive C2H2-type zinc fingers follow at residues 336-360, 366-388, and 394-416; these read YACP…IRIH, FQCR…IRTH, and FACD…TKIH. The interval 407–478 is disordered; the sequence is DERKRHTKIH…SSTYPSPAHS (72 aa). The span at 411 to 421 shows a compositional bias: basic residues; the sequence is RHTKIHLRQKD. The segment covering 427–475 has biased composition (low complexity); sequence SVVASPAASSLSSYPSPVATSYPSPATTSFPSPVPTSYSSPGSSTYPSP.

Belongs to the EGR C2H2-type zinc-finger protein family. In terms of assembly, interacts with SNAI1 and SP1 upon 12-O-tetradecanoylphorbol-13-acetate (TPA) induction. Detected in lung vasculature and in mononuclear phagocytes. Detected in liver (at protein level). Expressed in the liver in a circadian manner.

It is found in the nucleus. It localises to the cytoplasm. Functionally, transcriptional regulator. Recognizes and binds to the DNA sequence 5'-GCG(T/G)GGGCG-3'(EGR-site) in the promoter region of target genes. Binds double-stranded target DNA, irrespective of the cytosine methylation status. Regulates the transcription of numerous target genes, and thereby plays an important role in regulating the response to growth factors, DNA damage, and ischemia. Plays a role in the regulation of cell survival, proliferation and cell death. Activates expression of p53/TP53 and TGFB1, and thereby helps prevent tumor formation. Required for normal progress through mitosis and normal proliferation of hepatocytes after partial hepatectomy. Mediates responses to ischemia and hypoxia; regulates the expression of proteins such as IL1B and CXCL2 that are involved in inflammatory processes and development of tissue damage after ischemia. Regulates biosynthesis of luteinizing hormone (LHB) in the pituitary. Regulates the amplitude of the expression rhythms of clock genes: BMAL1, PER2 and NR1D1 in the liver via the activation of PER1 (clock repressor) transcription. Regulates the rhythmic expression of core-clock gene BMAL1 in the suprachiasmatic nucleus (SCN). This chain is Early growth response protein 1 (Egr1), found in Mus musculus (Mouse).